The sequence spans 541 residues: Formimidoyltransferase-cyclodeaminase (541 aa).

Residues M1–F181 are formiminotransferase N-subdomain. The active-site For formimidoyltransferase activity is H82. G163–G172 serves as a coordination point for folate. Residues L182–V326 are formiminotransferase C-subdomain. The linker stretch occupies residues P327 to S334. The tract at residues L335–A541 is cyclodeaminase/cyclohydrolase. Catalysis depends on D412, which acts as the For cyclodeaminase activity. S520 is modified (phosphoserine).

This sequence in the C-terminal section; belongs to the cyclodeaminase/cyclohydrolase family. It in the N-terminal section; belongs to the formiminotransferase family. Homooctamer, including four polyglutamate binding sites. The subunits are arranged as a tetramer of dimers, and form a planar ring-shaped structure.

Its subcellular location is the cytoplasm. The protein resides in the cytosol. It is found in the golgi apparatus. It localises to the cytoskeleton. The protein localises to the microtubule organizing center. Its subcellular location is the centrosome. The protein resides in the centriole. The catalysed reaction is 5-formimidoyltetrahydrofolate + L-glutamate = N-formimidoyl-L-glutamate + (6S)-5,6,7,8-tetrahydrofolate. It catalyses the reaction 5-formimidoyltetrahydrofolate + 2 H(+) = (6R)-5,10-methenyltetrahydrofolate + NH4(+). The protein operates within amino-acid degradation; L-histidine degradation into L-glutamate; L-glutamate from N-formimidoyl-L-glutamate (transferase route): step 1/1. Its function is as follows. Folate-dependent enzyme, that displays both transferase and deaminase activity. Serves to channel one-carbon units from formiminoglutamate to the folate pool. Binds and promotes bundling of vimentin filaments originating from the Golgi. The sequence is that of Formimidoyltransferase-cyclodeaminase (FTCD) from Sus scrofa (Pig).